Here is a 24-residue protein sequence, read N- to C-terminus: M-poneritoxin-Ng1e (24 aa).

Expressed by the venom gland.

It is found in the secreted. The protein resides in the target cell membrane. Functionally, has a broad spectrum of activity against both Gram-positive and Gram-negative bacteria and S.cerevisiae. Has insecticidal and hemolytic activities. May act by disrupting the integrity of the bacterial cell membrane. This chain is M-poneritoxin-Ng1e, found in Neoponera goeldii (Ponerine ant).